The sequence spans 457 residues: G-protein coupled receptor 135 (457 aa).

The segment at 1–27 (MEEQARPPSRPAASATLPGSAHPGGAA) is disordered. Residues 1–64 (MEEQARPPSR…EAAGSRGPAP (64 aa)) lie on the Extracellular side of the membrane. N-linked (GlcNAc...) asparagine glycosylation is present at N47. The helical transmembrane segment at 65-85 (LLWHGAAVAAQALVLLLIFLL) threads the bilayer. Residues 86–109 (SSLGNCAVMGVIVKHRQLRTVTNA) lie on the Cytoplasmic side of the membrane. The helical transmembrane segment at 110-130 (FILSLSLSDLLTALLCLPAAF) threads the bilayer. The Extracellular segment spans residues 131–156 (LDLFAPPGDSGPWRSFCAASRFFSSC). A helical membrane pass occupies residues 157–177 (FGIVSTFSVALISLDRYCAIV). Residues 178–189 (RPPRDKLGRRRA) are Cytoplasmic-facing. The helical transmembrane segment at 190–210 (LQLLAGAWLAALGFSLPWELL) threads the bilayer. The Extracellular segment spans residues 211-235 (RAPREPPTPQSFHRCLYRTSPDPAQ). Residues 236–256 (LGAAYSVGLVVACYLLPFLLM) form a helical membrane-spanning segment. The Cytoplasmic portion of the chain corresponds to 257–295 (CFCRYHICKTVRLSDVRVRPMTTYARVLRFFSEVRTATT). A helical membrane pass occupies residues 296-316 (VLIMIVFVICCWGPYCFLVLL). At 317–329 (AATRQGQTTQAPS) the chain is on the extracellular side. Residues 330-350 (LLNVAAVWLTWANGAINPVIY) form a helical membrane-spanning segment. The Cytoplasmic portion of the chain corresponds to 351 to 457 (AIRNPNISMF…HKSETRDSSI (107 aa)).

Belongs to the G-protein coupled receptor 1 family. In terms of assembly, interacts with MTNR1B. Interacts with ARRB1 and ARRB2 in a spontaneous and agonist-independent manner; leading to the internalization of GPR135 in the endosomal compartment.

The protein resides in the cell membrane. Its subcellular location is the endosome membrane. Orphan receptor. Has spontaneous activity for beta-arrestin recruitment. Shows a reciprocal regulatory interaction with the melatonin receptor MTNR1B most likely through receptor heteromerization. This chain is G-protein coupled receptor 135 (Gpr135), found in Rattus norvegicus (Rat).